The primary structure comprises 483 residues: Protein nucleotidyltransferase YdiU (483 aa).

8 residues coordinate ATP: glycine 81, glycine 83, arginine 84, lysine 103, aspartate 115, glycine 116, arginine 166, and arginine 173. The Proton acceptor role is filled by aspartate 244. Mg(2+) is bound by residues asparagine 245 and aspartate 254. Aspartate 254 is an ATP binding site.

This sequence belongs to the SELO family. The cofactor is Mg(2+). It depends on Mn(2+) as a cofactor.

It catalyses the reaction L-seryl-[protein] + ATP = 3-O-(5'-adenylyl)-L-seryl-[protein] + diphosphate. The catalysed reaction is L-threonyl-[protein] + ATP = 3-O-(5'-adenylyl)-L-threonyl-[protein] + diphosphate. It carries out the reaction L-tyrosyl-[protein] + ATP = O-(5'-adenylyl)-L-tyrosyl-[protein] + diphosphate. The enzyme catalyses L-histidyl-[protein] + UTP = N(tele)-(5'-uridylyl)-L-histidyl-[protein] + diphosphate. It catalyses the reaction L-seryl-[protein] + UTP = O-(5'-uridylyl)-L-seryl-[protein] + diphosphate. The catalysed reaction is L-tyrosyl-[protein] + UTP = O-(5'-uridylyl)-L-tyrosyl-[protein] + diphosphate. In terms of biological role, nucleotidyltransferase involved in the post-translational modification of proteins. It can catalyze the addition of adenosine monophosphate (AMP) or uridine monophosphate (UMP) to a protein, resulting in modifications known as AMPylation and UMPylation. This Shewanella halifaxensis (strain HAW-EB4) protein is Protein nucleotidyltransferase YdiU.